Here is a 436-residue protein sequence, read N- to C-terminus: Serine--tRNA ligase (436 aa).

A compositionally biased stretch (basic and acidic residues) spans 43-55 (TKSEQLKQKRNEV). Residues 43-68 (TKSEQLKQKRNEVSDQIAQAKRNKED) form a disordered region. 237 to 239 (TAE) is a binding site for L-serine. 268–270 (RSE) is an ATP binding site. Residue glutamate 291 participates in L-serine binding. 355–358 (EISS) provides a ligand contact to ATP. Serine 390 contacts L-serine.

The protein belongs to the class-II aminoacyl-tRNA synthetase family. Type-1 seryl-tRNA synthetase subfamily. In terms of assembly, homodimer. The tRNA molecule binds across the dimer.

The protein localises to the cytoplasm. It catalyses the reaction tRNA(Ser) + L-serine + ATP = L-seryl-tRNA(Ser) + AMP + diphosphate + H(+). It carries out the reaction tRNA(Sec) + L-serine + ATP = L-seryl-tRNA(Sec) + AMP + diphosphate + H(+). The protein operates within aminoacyl-tRNA biosynthesis; selenocysteinyl-tRNA(Sec) biosynthesis; L-seryl-tRNA(Sec) from L-serine and tRNA(Sec): step 1/1. Catalyzes the attachment of serine to tRNA(Ser). Is also able to aminoacylate tRNA(Sec) with serine, to form the misacylated tRNA L-seryl-tRNA(Sec), which will be further converted into selenocysteinyl-tRNA(Sec). In Lactobacillus johnsonii (strain CNCM I-12250 / La1 / NCC 533), this protein is Serine--tRNA ligase.